Consider the following 1245-residue polypeptide: Pesticidal crystal protein Cry5Ba (1245 aa).

The segment at 1219 to 1245 (PLPTDDQSSDGNTTSNTNSNTSMNNNQ) is disordered. Positions 1222–1245 (TDDQSSDGNTTSNTNSNTSMNNNQ) are enriched in low complexity.

The protein belongs to the delta endotoxin family.

In terms of biological role, promotes colloidosmotic lysis by binding to the midgut epithelial cells of hymenopteran species. The chain is Pesticidal crystal protein Cry5Ba (cry5Ba) from Bacillus thuringiensis.